We begin with the raw amino-acid sequence, 60 residues long: Toxin TdNa2 (60 aa).

The region spanning 1–59 is the LCN-type CS-alpha/beta domain; that stretch reads RDAYPADWRGCKPSCPWGSSSWCNEECTSLGGSSGYCAWPACWCYGLPDSVRYYNNKCH. 4 cysteine pairs are disulfide-bonded: cysteine 11/cysteine 58, cysteine 15/cysteine 37, cysteine 23/cysteine 42, and cysteine 27/cysteine 44.

Belongs to the long (4 C-C) scorpion toxin superfamily. Sodium channel inhibitor family. Beta subfamily. As to expression, expressed by the venom gland.

Its subcellular location is the secreted. Inhibits the sodium currents (Nav) in an apparent irreversible manner. Produces small depolarization and induces repetitive firing in squid axons. Is specific for arthropods (crickets, triatomides, crabs and squids), but is non-toxic to mice. The protein is Toxin TdNa2 of Tityus discrepans (Venezuelan scorpion).